Consider the following 602-residue polypeptide: Glutaminase liver isoform, mitochondrial (602 aa).

Residues 1-14 constitute a mitochondrion transit peptide; the sequence is MRSMRALQNALSRA. Disordered regions lie at residues 1-28 and 46-67; these read MRSMRALQNALSRAGSHGQRGGWGHPSR and QGRGTPHSHQPQHSDHDASNSG. Residue serine 219 coordinates substrate. Lysine 253 is modified (N6-succinyllysine). Asparagine 268 contributes to the substrate binding site. N6-acetyllysine is present on residues lysine 279 and lysine 284. The substrate site is built by glutamate 314 and asparagine 321. Position 329 is an N6-acetyllysine (lysine 329). Substrate contacts are provided by tyrosine 347, tyrosine 399, and valine 417. ANK repeat units follow at residues 518–551 and 552–585; these read DSRTALHVAAAEGHIDVVKFLIEACKVNPFVKDR and WGNIPLDDAVQFNHLEVVKLLQDYHDSYMLSETQ.

This sequence belongs to the glutaminase family. Homotetramer, dimer of dimers. Does not assemble into higher oligomers. Interacts with the PDZ domain of the syntrophin SNTA1. Interacts with the PDZ domain of TAX1BP3. In terms of tissue distribution, liver specific.

The protein resides in the mitochondrion. The catalysed reaction is L-glutamine + H2O = L-glutamate + NH4(+). Its function is as follows. Plays an important role in the regulation of glutamine catabolism. Promotes mitochondrial respiration and increases ATP generation in cells by catalyzing the synthesis of glutamate and alpha-ketoglutarate. Increases cellular anti-oxidant function via NADH and glutathione production. May play a role in preventing tumor proliferation. This Rattus norvegicus (Rat) protein is Glutaminase liver isoform, mitochondrial (Gls2).